Here is a 111-residue protein sequence, read N- to C-terminus: Thiosulfate sulfurtransferase GlpE (111 aa).

One can recognise a Rhodanese domain in the interval 16-104 (QTENAVLLDV…WQRAGLPMET (89 aa)). Catalysis depends on Cys64, which acts as the Cysteine persulfide intermediate.

Belongs to the GlpE family.

Its subcellular location is the cytoplasm. It carries out the reaction thiosulfate + hydrogen cyanide = thiocyanate + sulfite + 2 H(+). It catalyses the reaction thiosulfate + [thioredoxin]-dithiol = [thioredoxin]-disulfide + hydrogen sulfide + sulfite + 2 H(+). In terms of biological role, transferase that catalyzes the transfer of sulfur from thiosulfate to thiophilic acceptors such as cyanide or dithiols. May function in a CysM-independent thiosulfate assimilation pathway by catalyzing the conversion of thiosulfate to sulfite, which can then be used for L-cysteine biosynthesis. This is Thiosulfate sulfurtransferase GlpE from Actinobacillus succinogenes (strain ATCC 55618 / DSM 22257 / CCUG 43843 / 130Z).